The sequence spans 177 residues: Large ribosomal subunit protein uL6 (177 aa).

Belongs to the universal ribosomal protein uL6 family. Part of the 50S ribosomal subunit.

In terms of biological role, this protein binds to the 23S rRNA, and is important in its secondary structure. It is located near the subunit interface in the base of the L7/L12 stalk, and near the tRNA binding site of the peptidyltransferase center. The sequence is that of Large ribosomal subunit protein uL6 from Acidovorax ebreus (strain TPSY) (Diaphorobacter sp. (strain TPSY)).